The primary structure comprises 72 residues: Mitochondrial import receptor subunit TOM7-1 (72 aa).

Residues 2–41 (LKPKGKNTKKAAAADEDDGAVAVVGKFVKEWGTWTAKKAK) lie on the Cytoplasmic side of the membrane. The chain crosses the membrane as a helical span at residues 42–59 (VITHYGFIPLVIIIGMNS). Residues 60–72 (EPKPSLSQLLSPV) lie on the Mitochondrial intermembrane side of the membrane.

The protein belongs to the Tom7 family. As to quaternary structure, forms part of the preprotein translocase complex of the outer mitochondrial membrane (TOM complex).

The protein resides in the mitochondrion outer membrane. Functionally, seems to act as a modulator of the dynamics of the mitochondrial protein transport machinery. Seems to promote the dissociation of subunits of the outer membrane translocase. The chain is Mitochondrial import receptor subunit TOM7-1 (TOM7-1) from Solanum tuberosum (Potato).